We begin with the raw amino-acid sequence, 214 residues long: Dimethylamine corrinoid protein 2 (214 aa).

The region spanning 1 to 91 is the B12-binding N-terminal domain; the sequence is MATKEELIQE…DMPAGAATKK (91 aa). Residues 92–214 form the B12-binding domain; sequence LGVIVNGTVE…AVAKAKELLL (123 aa). H105 provides a ligand contact to methylcob(III)alamin.

It belongs to the methylamine corrinoid protein family.

The protein operates within one-carbon metabolism; methanogenesis from dimethylamine. Its function is as follows. Acts as a methyl group carrier between MtbB and MtbA. This Methanosarcina mazei (strain ATCC BAA-159 / DSM 3647 / Goe1 / Go1 / JCM 11833 / OCM 88) (Methanosarcina frisia) protein is Dimethylamine corrinoid protein 2 (mtbC2).